The sequence spans 364 residues: Aminomethyltransferase (364 aa).

It belongs to the GcvT family. In terms of assembly, the glycine cleavage system is composed of four proteins: P, T, L and H.

The catalysed reaction is N(6)-[(R)-S(8)-aminomethyldihydrolipoyl]-L-lysyl-[protein] + (6S)-5,6,7,8-tetrahydrofolate = N(6)-[(R)-dihydrolipoyl]-L-lysyl-[protein] + (6R)-5,10-methylene-5,6,7,8-tetrahydrofolate + NH4(+). The glycine cleavage system catalyzes the degradation of glycine. This chain is Aminomethyltransferase, found in Thermotoga maritima (strain ATCC 43589 / DSM 3109 / JCM 10099 / NBRC 100826 / MSB8).